Reading from the N-terminus, the 839-residue chain is Homeobox-leucine zipper protein HOX10 (839 aa).

Disordered stretches follow at residues 1-24 and 132-157; these read MAAA…SGMD and QNTP…RDAS. The segment at residues 24-87 is a DNA-binding region (homeobox); it reads DSGKYVRYTP…NRRCRDKQRK (64 aa). A coiled-coil region spans residues 91–134; it reads RLQAVNRKLTAMNKLLMEENERLQKQVSQLVHENAHMRQQLQNT. Residues 155 to 383 form the START domain; the sequence is DASNPSGLLS…IAQETSGEVV (229 aa).

This sequence belongs to the HD-ZIP homeobox family. Class III subfamily. In terms of tissue distribution, expressed in stems, leaf sheaths and blades and panicles.

The protein resides in the nucleus. Functionally, probable transcription factor. The sequence is that of Homeobox-leucine zipper protein HOX10 (HOX10) from Oryza sativa subsp. japonica (Rice).